A 334-amino-acid polypeptide reads, in one-letter code: Ferredoxin--NADP reductase (334 aa).

Residues D33, Q41, Y46, A86, F120, D286, and T327 each contribute to the FAD site.

It belongs to the ferredoxin--NADP reductase type 2 family. As to quaternary structure, homodimer. The cofactor is FAD.

The catalysed reaction is 2 reduced [2Fe-2S]-[ferredoxin] + NADP(+) + H(+) = 2 oxidized [2Fe-2S]-[ferredoxin] + NADPH. This Rickettsia prowazekii (strain Madrid E) protein is Ferredoxin--NADP reductase.